The following is a 646-amino-acid chain: Probable DNA helicase MCM9 (646 aa).

The C4-type zinc finger occupies C155–C188. The region spanning G308–I511 is the MCM domain. G358–S365 is an ATP binding site. Residues S487 to D490 carry the Arginine finger motif.

Belongs to the MCM family.

It is found in the nucleus. It carries out the reaction ATP + H2O = ADP + phosphate + H(+). Its function is as follows. Probable DNA helicase that may play a role in DNA repair during meiosis. The chain is Probable DNA helicase MCM9 (MCM9) from Arabidopsis thaliana (Mouse-ear cress).